The primary structure comprises 71 residues: Light-harvesting protein B-800/850 alpha chain (71 aa).

Over 1-15 the chain is Cytoplasmic; sequence MNQGKVWRVVKPTVG. Residues 16 to 36 form a helical membrane-spanning segment; sequence VPVYLGAVAVTALILHGGLLA. His31 contributes to the a bacteriochlorophyll binding site. At 37-50 the chain is on the periplasmic side; that stretch reads KTDWFGAYWNGGKK. The chain crosses the membrane as a helical span at residues 51–71; sequence AAAAAAAVAPAPVAAPQAPAQ.

This sequence belongs to the antenna complex alpha subunit family. In terms of assembly, an alpha/beta heterodimer conjugated to 3 bacteriochlorophyll molecules. The core complex is formed by different alpha and beta chains, binding bacteriochlorophyll molecules, and arranged most probably in tetrameric structures disposed around the reaction center. The non-pigmented gamma chains may constitute additional components.

Its subcellular location is the cell membrane. Functionally, antenna complexes are light-harvesting systems, which transfer the excitation energy to the reaction centers. The protein is Light-harvesting protein B-800/850 alpha chain (pucA) of Rubrivivax gelatinosus (Rhodocyclus gelatinosus).